The following is a 293-amino-acid chain: Shikimate kinase (293 aa).

87–97 lines the ATP pocket; that stretch reads PLAGGLKSSSA.

The protein belongs to the GHMP kinase family. Archaeal shikimate kinase subfamily.

It localises to the cytoplasm. It carries out the reaction shikimate + ATP = 3-phosphoshikimate + ADP + H(+). It functions in the pathway metabolic intermediate biosynthesis; chorismate biosynthesis; chorismate from D-erythrose 4-phosphate and phosphoenolpyruvate: step 5/7. In Methanosarcina mazei (strain ATCC BAA-159 / DSM 3647 / Goe1 / Go1 / JCM 11833 / OCM 88) (Methanosarcina frisia), this protein is Shikimate kinase.